Consider the following 59-residue polypeptide: Large ribosomal subunit protein uL30 (59 aa).

Belongs to the universal ribosomal protein uL30 family. In terms of assembly, part of the 50S ribosomal subunit.

This chain is Large ribosomal subunit protein uL30, found in Alkaliphilus metalliredigens (strain QYMF).